Reading from the N-terminus, the 279-residue chain is MKENKIIIGSHVEFKAPDYLFGAAKTSYNNKANAMMIYLGAPQNSKRVNVSKYKIEEYKRDFEKIIVPENIIVHAPYITNCANPDKFDFATDFLIEEIRRMSFFGAKYLVLHPGAFTTFSKEIAYEILEKALIKILDQTENVVIALETMSGKGTEIGTKINELTNLIEKIKSPRLALCLDTCHVWDAGYDIKNLEVFINHLEEIDALKYIKVIHLNDSKNDIFSKKDRHENIGKGFIGFETLQKIVFHEKFKNIPIILETPWVENIPIYDKEIKLLLGQ.

Positions 74, 112, 147, 180, 183, 214, 227, 229, and 259 each coordinate Zn(2+).

This sequence belongs to the AP endonuclease 2 family. Requires Zn(2+) as cofactor.

It catalyses the reaction Endonucleolytic cleavage to 5'-phosphooligonucleotide end-products.. Functionally, endonuclease IV plays a role in DNA repair. It cleaves phosphodiester bonds at apurinic or apyrimidinic (AP) sites, generating a 3'-hydroxyl group and a 5'-terminal sugar phosphate. The chain is Probable endonuclease 4 from Mycoplasma mobile (strain ATCC 43663 / 163K / NCTC 11711) (Mesomycoplasma mobile).